We begin with the raw amino-acid sequence, 737 residues long: MPDHDSTALLSRQTKRRRVDIGVKRTVGTASAFFAKARATFFSAMNPQGSEQDVEYSVVQHADGEKSNVLRKLLKRANSYEDAMMPFPGATIISQLLKNNMNKNGGTEPSFQASGLSSTGSEVHQEDICSNSSRDSPPECLSPFGRPTMSQFDMDRLCDEHLRAKRARVENIIRGMSHSPSVALRGNENEREMAPQSVSPRESYRENKRKQKLPQQQQQSFQQLVSARKEQKREERRQLKQQLEDMQKQLRQLQEKFYQIYDSTDSENDEDGNLSEDSMRSEILDARAQDSVGRSDNEMCELDPGQFIDRARALIREQEMAENKPKREGNNKERDHGPNSLQPEGKHLAETLKQELNTAMSQVVDTVVKVFSAKPSRQVPQVFPPLQIPQARFAVNGENHNFHTANQRLQCFGDVIIPNPLDTFGNVQMASSTDQTEALPLVVRKNSSDQSASGPAAGGHHQPLHQSPLSATTGFTTSTFRHPFPLPLMAYPFQSPLGAPSGSFSGKDRASPESLDLTRDTTSLRTKMSSHHLSHHPCSPAHPPSTAEGLSLSLIKSECGDLQDMSEISPYSGSAMQEGLSPNHLKKAKLMFFYTRYPSSNMLKTYFSDVKFNRCITSQLIKWFSNFREFYYIQMEKYARQAINDGVTSTEELSITRDCELYRALNMHYNKANDFEVPERFLEVAQITLREFFNAIIAGKDVDPSWKKAIYKVICKLDSEVPEIFKSPNCLQELLHE.

The segment at 1–28 (MPDHDSTALLSRQTKRRRVDIGVKRTVG) is interaction with RORG. The segment covering 103 to 135 (KNGGTEPSFQASGLSSTGSEVHQEDICSNSSRD) has biased composition (polar residues). The interval 103–149 (KNGGTEPSFQASGLSSTGSEVHQEDICSNSSRDSPPECLSPFGRPTM) is disordered. 3 positions are modified to phosphoserine: Ser177, Ser179, and Ser199. The interval 178-242 (HSPSVALRGN…REERRQLKQQ (65 aa)) is disordered. The span at 213–223 (LPQQQQQSFQQ) shows a compositional bias: low complexity. Positions 227–242 (ARKEQKREERRQLKQQ) are enriched in basic and acidic residues. Phosphoserine is present on residues Ser291 and Ser295. The span at 320-337 (MAENKPKREGNNKERDHG) shows a compositional bias: basic and acidic residues. Disordered regions lie at residues 320–344 (MAENKPKREGNNKERDHGPNSLQPE) and 445–476 (KNSSDQSASGPAAGGHHQPLHQSPLSATTGFT). A Glycyl lysine isopeptide (Lys-Gly) (interchain with G-Cter in SUMO2) cross-link involves residue Lys324. Residues 464–476 (LHQSPLSATTGFT) are compositionally biased toward polar residues. Ser511, Ser514, and Ser557 each carry phosphoserine. In terms of domain architecture, Prospero-type homeo spans 577–635 (QEGLSPNHLKKAKLMFFYTRYPSSNMLKTYFSDVKFNRCITSQLIKWFSNFREFYYIQM). The homeo-Prospero stretch occupies residues 577–735 (QEGLSPNHLK…KSPNCLQELL (159 aa)). Residues 636–735 (EKYARQAIND…KSPNCLQELL (100 aa)) form the Prospero domain. Residues 723 to 729 (EIFKSPN) form an essential for nuclear localization, interaction with RORG, repression of RORG transcriptional activator activity region.

The protein belongs to the Prospero homeodomain family. As to quaternary structure, interacts with RORA and RORG (via AF-2 motif). Most actively expressed in the developing lens. Detected also in embryonic brain, lung, liver and kidney. In adult, it is more abundant in heart and liver than in brain, skeletal muscle, kidney and pancreas.

Its subcellular location is the nucleus. Functionally, transcription factor involved in developmental processes such as cell fate determination, gene transcriptional regulation and progenitor cell regulation in a number of organs. Plays a critical role in embryonic development and functions as a key regulatory protein in neurogenesis and the development of the heart, eye lens, liver, pancreas and the lymphatic system. Involved in the regulation of the circadian rhythm. Represses: transcription of the retinoid-related orphan receptor RORG, transcriptional activator activity of RORA and RORG and the expression of RORA/G-target genes including core clock components: BMAL1, NPAS2 and CRY1 and metabolic genes: AVPR1A and ELOVL3. The chain is Prospero homeobox protein 1 (PROX1) from Homo sapiens (Human).